The sequence spans 480 residues: Proline--tRNA ligase (480 aa).

It belongs to the class-II aminoacyl-tRNA synthetase family. ProS type 3 subfamily. Homodimer.

It localises to the cytoplasm. The enzyme catalyses tRNA(Pro) + L-proline + ATP = L-prolyl-tRNA(Pro) + AMP + diphosphate. Its function is as follows. Catalyzes the attachment of proline to tRNA(Pro) in a two-step reaction: proline is first activated by ATP to form Pro-AMP and then transferred to the acceptor end of tRNA(Pro). The chain is Proline--tRNA ligase from Chloroflexus aggregans (strain MD-66 / DSM 9485).